The primary structure comprises 406 residues: 3-phosphoshikimate 1-carboxyvinyltransferase (406 aa).

The 3-phosphoshikimate site is built by lysine 20, serine 21, and arginine 25. Lysine 20 lines the phosphoenolpyruvate pocket. Glycine 84 and arginine 112 together coordinate phosphoenolpyruvate. Positions 155, 156, 157, 295, 317, and 321 each coordinate 3-phosphoshikimate. Glutamine 157 is a phosphoenolpyruvate binding site. Aspartate 295 acts as the Proton acceptor in catalysis. Phosphoenolpyruvate contacts are provided by arginine 325, arginine 366, and lysine 392.

Belongs to the EPSP synthase family. Monomer.

The protein localises to the cytoplasm. The catalysed reaction is 3-phosphoshikimate + phosphoenolpyruvate = 5-O-(1-carboxyvinyl)-3-phosphoshikimate + phosphate. Its pathway is metabolic intermediate biosynthesis; chorismate biosynthesis. Catalyzes the transfer of the enolpyruvyl moiety of phosphoenolpyruvate (PEP) to the 5-hydroxyl of shikimate-3-phosphate (S3P) to produce enolpyruvyl shikimate-3-phosphate and inorganic phosphate. The chain is 3-phosphoshikimate 1-carboxyvinyltransferase from Pyrococcus furiosus (strain ATCC 43587 / DSM 3638 / JCM 8422 / Vc1).